The primary structure comprises 114 residues: Ribosome-binding factor A (114 aa).

The protein belongs to the RbfA family. Monomer. Binds 30S ribosomal subunits, but not 50S ribosomal subunits or 70S ribosomes.

The protein localises to the cytoplasm. One of several proteins that assist in the late maturation steps of the functional core of the 30S ribosomal subunit. Associates with free 30S ribosomal subunits (but not with 30S subunits that are part of 70S ribosomes or polysomes). Required for efficient processing of 16S rRNA. May interact with the 5'-terminal helix region of 16S rRNA. This chain is Ribosome-binding factor A, found in Staphylococcus saprophyticus subsp. saprophyticus (strain ATCC 15305 / DSM 20229 / NCIMB 8711 / NCTC 7292 / S-41).